The sequence spans 322 residues: Phospho-N-acetylmuramoyl-pentapeptide-transferase (322 aa).

10 consecutive transmembrane segments (helical) span residues 10–30 (YTAL…IPML), 51–71 (NGTP…TGLT), 79–99 (MAVG…DDFI), 107–127 (LGLK…YVAF), 146–166 (FVIN…VAIV), 178–198 (LASG…SSIA), 203–223 (VAVL…FNSY), 227–247 (VFMG…FSVL), 250–270 (SVLI…SVLI), and 302–322 (VVFI…IAVF).

The protein belongs to the glycosyltransferase 4 family. MraY subfamily. Requires Mg(2+) as cofactor.

It localises to the cell membrane. The catalysed reaction is UDP-N-acetyl-alpha-D-muramoyl-L-alanyl-gamma-D-glutamyl-meso-2,6-diaminopimeloyl-D-alanyl-D-alanine + di-trans,octa-cis-undecaprenyl phosphate = di-trans,octa-cis-undecaprenyl diphospho-N-acetyl-alpha-D-muramoyl-L-alanyl-D-glutamyl-meso-2,6-diaminopimeloyl-D-alanyl-D-alanine + UMP. It participates in cell wall biogenesis; peptidoglycan biosynthesis. Functionally, catalyzes the initial step of the lipid cycle reactions in the biosynthesis of the cell wall peptidoglycan: transfers peptidoglycan precursor phospho-MurNAc-pentapeptide from UDP-MurNAc-pentapeptide onto the lipid carrier undecaprenyl phosphate, yielding undecaprenyl-pyrophosphoryl-MurNAc-pentapeptide, known as lipid I. The protein is Phospho-N-acetylmuramoyl-pentapeptide-transferase of Clostridioides difficile (strain 630) (Peptoclostridium difficile).